Consider the following 596-residue polypeptide: Pentatricopeptide repeat-containing protein At5g38730 (596 aa).

PPR repeat units lie at residues 132 to 166, 167 to 201, 202 to 236, 237 to 271, 272 to 302, 306 to 340, 341 to 375, 376 to 410, 411 to 445, 446 to 480, 481 to 515, and 516 to 550; these read VSHV…GLKP, HLQA…GVVA, NIHV…GVFP, DIFT…GVAP, NIVT…IKDD, NHVT…GFSP, GVVT…KIEP, DNIT…GLKL, DMYS…GFSP, GYAT…GLCA, DVAL…GLVG, and DSVI…RLMV.

The protein belongs to the PPR family. P subfamily.

The polypeptide is Pentatricopeptide repeat-containing protein At5g38730 (Arabidopsis thaliana (Mouse-ear cress)).